Consider the following 307-residue polypeptide: Mycothiol acetyltransferase (307 aa).

2 consecutive N-acetyltransferase domains span residues 15 to 158 (HTLD…LAEP) and 164 to 307 (VTVR…RTES). Glutamate 46 provides a ligand contact to 1D-myo-inositol 2-(L-cysteinylamino)-2-deoxy-alpha-D-glucopyranoside. 90–92 (LVV) serves as a coordination point for acetyl-CoA. 1D-myo-inositol 2-(L-cysteinylamino)-2-deoxy-alpha-D-glucopyranoside contacts are provided by glutamate 191, lysine 230, and glutamate 239. Acetyl-CoA-binding positions include 243–245 (VGV) and 250–256 (QGGGLGK). Residue tyrosine 277 coordinates 1D-myo-inositol 2-(L-cysteinylamino)-2-deoxy-alpha-D-glucopyranoside.

Belongs to the acetyltransferase family. MshD subfamily. As to quaternary structure, monomer.

The catalysed reaction is 1D-myo-inositol 2-(L-cysteinylamino)-2-deoxy-alpha-D-glucopyranoside + acetyl-CoA = mycothiol + CoA + H(+). In terms of biological role, catalyzes the transfer of acetyl from acetyl-CoA to desacetylmycothiol (Cys-GlcN-Ins) to form mycothiol. The protein is Mycothiol acetyltransferase of Streptomyces griseus subsp. griseus (strain JCM 4626 / CBS 651.72 / NBRC 13350 / KCC S-0626 / ISP 5235).